Reading from the N-terminus, the 415-residue chain is Probable tRNA pseudouridine synthase D (415 aa).

Asp83 functions as the Nucleophile in the catalytic mechanism. One can recognise a TRUD domain in the interval 158-378; that stretch reads GFPNYFGYQR…PGRRRELLIR (221 aa).

The protein belongs to the pseudouridine synthase TruD family.

It catalyses the reaction uridine(13) in tRNA = pseudouridine(13) in tRNA. Functionally, could be responsible for synthesis of pseudouridine from uracil-13 in transfer RNAs. In Thermococcus gammatolerans (strain DSM 15229 / JCM 11827 / EJ3), this protein is Probable tRNA pseudouridine synthase D.